A 93-amino-acid polypeptide reads, in one-letter code: Pyrimidine/purine nucleoside phosphorylase (93 aa).

This sequence belongs to the nucleoside phosphorylase PpnP family.

It carries out the reaction a purine D-ribonucleoside + phosphate = a purine nucleobase + alpha-D-ribose 1-phosphate. The enzyme catalyses adenosine + phosphate = alpha-D-ribose 1-phosphate + adenine. The catalysed reaction is cytidine + phosphate = cytosine + alpha-D-ribose 1-phosphate. It catalyses the reaction guanosine + phosphate = alpha-D-ribose 1-phosphate + guanine. It carries out the reaction inosine + phosphate = alpha-D-ribose 1-phosphate + hypoxanthine. The enzyme catalyses thymidine + phosphate = 2-deoxy-alpha-D-ribose 1-phosphate + thymine. The catalysed reaction is uridine + phosphate = alpha-D-ribose 1-phosphate + uracil. It catalyses the reaction xanthosine + phosphate = alpha-D-ribose 1-phosphate + xanthine. In terms of biological role, catalyzes the phosphorolysis of diverse nucleosides, yielding D-ribose 1-phosphate and the respective free bases. Can use uridine, adenosine, guanosine, cytidine, thymidine, inosine and xanthosine as substrates. Also catalyzes the reverse reactions. The chain is Pyrimidine/purine nucleoside phosphorylase from Vibrio atlanticus (strain LGP32) (Vibrio splendidus (strain Mel32)).